We begin with the raw amino-acid sequence, 318 residues long: 4-hydroxy-3-methylbut-2-enyl diphosphate reductase (318 aa).

[4Fe-4S] cluster is bound at residue Cys-12. 2 residues coordinate (2E)-4-hydroxy-3-methylbut-2-enyl diphosphate: His-41 and His-74. Dimethylallyl diphosphate-binding residues include His-41 and His-74. Residues His-41 and His-74 each contribute to the isopentenyl diphosphate site. Residue Cys-96 coordinates [4Fe-4S] cluster. Position 124 (His-124) interacts with (2E)-4-hydroxy-3-methylbut-2-enyl diphosphate. His-124 contributes to the dimethylallyl diphosphate binding site. His-124 serves as a coordination point for isopentenyl diphosphate. Glu-126 (proton donor) is an active-site residue. Thr-168 provides a ligand contact to (2E)-4-hydroxy-3-methylbut-2-enyl diphosphate. Cys-198 provides a ligand contact to [4Fe-4S] cluster. Residues Ser-226, Ser-227, Asn-228, and Ser-270 each coordinate (2E)-4-hydroxy-3-methylbut-2-enyl diphosphate. Residues Ser-226, Ser-227, Asn-228, and Ser-270 each contribute to the dimethylallyl diphosphate site. Residues Ser-226, Ser-227, Asn-228, and Ser-270 each contribute to the isopentenyl diphosphate site.

The protein belongs to the IspH family. It depends on [4Fe-4S] cluster as a cofactor.

It carries out the reaction isopentenyl diphosphate + 2 oxidized [2Fe-2S]-[ferredoxin] + H2O = (2E)-4-hydroxy-3-methylbut-2-enyl diphosphate + 2 reduced [2Fe-2S]-[ferredoxin] + 2 H(+). The enzyme catalyses dimethylallyl diphosphate + 2 oxidized [2Fe-2S]-[ferredoxin] + H2O = (2E)-4-hydroxy-3-methylbut-2-enyl diphosphate + 2 reduced [2Fe-2S]-[ferredoxin] + 2 H(+). Its pathway is isoprenoid biosynthesis; dimethylallyl diphosphate biosynthesis; dimethylallyl diphosphate from (2E)-4-hydroxy-3-methylbutenyl diphosphate: step 1/1. It functions in the pathway isoprenoid biosynthesis; isopentenyl diphosphate biosynthesis via DXP pathway; isopentenyl diphosphate from 1-deoxy-D-xylulose 5-phosphate: step 6/6. Functionally, catalyzes the conversion of 1-hydroxy-2-methyl-2-(E)-butenyl 4-diphosphate (HMBPP) into a mixture of isopentenyl diphosphate (IPP) and dimethylallyl diphosphate (DMAPP). Acts in the terminal step of the DOXP/MEP pathway for isoprenoid precursor biosynthesis. The polypeptide is 4-hydroxy-3-methylbut-2-enyl diphosphate reductase (Psychrobacter arcticus (strain DSM 17307 / VKM B-2377 / 273-4)).